A 397-amino-acid polypeptide reads, in one-letter code: MTAAIYLVKGREKSVKRKHPWIFSRGIGKVEGEPALGETVDVFTHDGKWLAKAAYSPESQIRARIWSFEKEEINKAFFVKRFQNAQLLREDVIERDGLTGYRLIAAESDGLPGVTIDRYQNFFVCQLLSAGAEYNKQAIVDALVECFPDCNVYERSDVAVRKKEGLKETTGVLHGEEPPKSVVIEENGVKISVDIVGGHKTGFYLDQRDSRQQAMKYVKDKEVLNCFSYTGGFGLYALKGGAKRVINADVSQPALDTAKYNAELNEFDISKKRAVFLNADVFKLLREYRDQGTQFDVVIMDPPKFAESKAQLNGACRGYKDINMLALQILKPGGTLLTYSCSGLMDQVLFQKIIADAAVDANRQVKFVERFEQAADHPTDTAYPEGFYLKGFACKVL.

Residues 2 to 79 (TAAIYLVKGR…KEEINKAFFV (78 aa)) form the PUA domain.

This sequence belongs to the methyltransferase superfamily. RlmI family.

The protein resides in the cytoplasm. The enzyme catalyses cytidine(1962) in 23S rRNA + S-adenosyl-L-methionine = 5-methylcytidine(1962) in 23S rRNA + S-adenosyl-L-homocysteine + H(+). Its function is as follows. Specifically methylates the cytosine at position 1962 (m5C1962) of 23S rRNA. The protein is Ribosomal RNA large subunit methyltransferase I of Vibrio parahaemolyticus serotype O3:K6 (strain RIMD 2210633).